Here is a 174-residue protein sequence, read N- to C-terminus: Flavodoxin 1 (174 aa).

In terms of domain architecture, Flavodoxin-like spans 4–168; it reads IGIFYGSSSG…RLERWIAVLQ (165 aa). FMN contacts are provided by residues 10–14 and 89–122; these read SSSGV and LFGAGDYVSHGEQFVSALGVLYDKFKARGAALVG.

It depends on FMN as a cofactor.

Flavodoxins are low-potential electron donors to a number of redox enzymes. AvFld 1 is able to donate electrons to the assimilatory nitrate reductase of A.vinelandii to catalyze the reduction of nitrate to nitrite. The protein is Flavodoxin 1 of Azotobacter vinelandii (strain DJ / ATCC BAA-1303).